We begin with the raw amino-acid sequence, 338 residues long: Glycerol-3-phosphate dehydrogenase [NAD(P)+] (338 aa).

4 residues coordinate NADPH: S12, W13, K34, and K110. Sn-glycerol 3-phosphate is bound by residues K110, G141, and S143. A145 is an NADPH binding site. Sn-glycerol 3-phosphate is bound by residues K196, D249, S259, R260, and N261. Residue K196 is the Proton acceptor of the active site. Position 260 (R260) interacts with NADPH. NADPH is bound by residues V284 and E286.

It belongs to the NAD-dependent glycerol-3-phosphate dehydrogenase family.

The protein localises to the cytoplasm. The enzyme catalyses sn-glycerol 3-phosphate + NAD(+) = dihydroxyacetone phosphate + NADH + H(+). It carries out the reaction sn-glycerol 3-phosphate + NADP(+) = dihydroxyacetone phosphate + NADPH + H(+). It functions in the pathway membrane lipid metabolism; glycerophospholipid metabolism. Catalyzes the reduction of the glycolytic intermediate dihydroxyacetone phosphate (DHAP) to sn-glycerol 3-phosphate (G3P), the key precursor for phospholipid synthesis. The polypeptide is Glycerol-3-phosphate dehydrogenase [NAD(P)+] (Ligilactobacillus salivarius (strain UCC118) (Lactobacillus salivarius)).